An 818-amino-acid polypeptide reads, in one-letter code: METIKRLIWPKKEIFVGDFAIGVNRTVPVDVFQLVCRVVLRYMRTGKIECESDSLSKFVVELLKTDCAAKWEWFMKRRQGGDYIVPLSIATIPLMPLLSCTTSVRAVSVGVLGCGFSSNIPIPRLSVPRKGLLLRLAAGLALAPICALAVYATLPREKLSVYKLRTEARTHMEDEKEATDCLVVESARELKGKDGEDLLTGSRMTKVVASTGRRRRTPYAAKVAQVARAKVGYLRNTPENRLIYQRVIIEIMDKDCVRYVDRDVILPMAIGCCFVYQDGVEESAALWGSQDSLGVKXGGLVRLPGVVTQINRDIPSDVLLPQEVLEVRTGPPIAKDRNIFMVAGCPSQARFLVHNHCLKNLKRGLVERVFCVEKDGKLTRTPQPTKGSFGRLSPFRKAVCEKVGVAHRLGYDGFLSYYSGAKLRTYTRAVESLHITPVSERDSHLTTFVKAEKISTSKGDPAPRVIQPRNPRYNVELGRYLRHMESKLMKAVDDVFGETTCIKGYTADEVGAIFRRKWDRFDKPVAIGLDASRFDQHCSVEALQYEHSFYRALYPGNKLLSKLLEWQLHNKGKGYVPDGTITYKKEGCRMSGDINTSLGNYLLMCAMVHGYMRHLGINEFSLANCGDDCVLIIERRNLKRVQGTLPGYFLNLGYTMKVESPVFQLEEVEFCQAHPVQFQGGWKMVRNVRTAMSKDVHCVNNIRDLATRRAWSNAQHHGGLALSAGIPVVERFYSRFPLYDMPVKHQRIDTVTNVHKWRGSGGNYHVTPESRASFWAAFGLTGDEQVALEDRLDRWEMDLFGREGVDAHEPSILDSAVA.

In terms of domain architecture, RdRp catalytic spans 524–641 (PVAIGLDASR…IIERRNLKRV (118 aa)).

The protein belongs to the tombusviridae RNA polymerase family.

It catalyses the reaction RNA(n) + a ribonucleoside 5'-triphosphate = RNA(n+1) + diphosphate. Its function is as follows. RNA-dependent RNA polymerase that plays an essential role in the virus replication. This chain is RNA-directed RNA polymerase, found in Cymbidium (Creeping white clover).